The chain runs to 508 residues: UDP-N-acetylmuramoyl-L-alanyl-D-glutamate--2,6-diaminopimelate ligase (508 aa).

A UDP-N-acetyl-alpha-D-muramoyl-L-alanyl-D-glutamate-binding site is contributed by Ser-43. Residue 124 to 130 participates in ATP binding; the sequence is GTNGKTT. Residues 166 to 167, Ser-193, and Arg-201 contribute to the UDP-N-acetyl-alpha-D-muramoyl-L-alanyl-D-glutamate site; that span reads TT. The residue at position 233 (Lys-233) is an N6-carboxylysine. Meso-2,6-diaminopimelate contacts are provided by residues Arg-404, 428–431, Gly-478, and Glu-482; that span reads DNPR. The short motif at 428–431 is the Meso-diaminopimelate recognition motif element; sequence DNPR.

The protein belongs to the MurCDEF family. MurE subfamily. Mg(2+) is required as a cofactor. In terms of processing, carboxylation is probably crucial for Mg(2+) binding and, consequently, for the gamma-phosphate positioning of ATP.

It localises to the cytoplasm. The enzyme catalyses UDP-N-acetyl-alpha-D-muramoyl-L-alanyl-D-glutamate + meso-2,6-diaminopimelate + ATP = UDP-N-acetyl-alpha-D-muramoyl-L-alanyl-gamma-D-glutamyl-meso-2,6-diaminopimelate + ADP + phosphate + H(+). It functions in the pathway cell wall biogenesis; peptidoglycan biosynthesis. In terms of biological role, catalyzes the addition of meso-diaminopimelic acid to the nucleotide precursor UDP-N-acetylmuramoyl-L-alanyl-D-glutamate (UMAG) in the biosynthesis of bacterial cell-wall peptidoglycan. This Chlorobaculum tepidum (strain ATCC 49652 / DSM 12025 / NBRC 103806 / TLS) (Chlorobium tepidum) protein is UDP-N-acetylmuramoyl-L-alanyl-D-glutamate--2,6-diaminopimelate ligase.